A 119-amino-acid chain; its full sequence is Protein TusC (119 aa).

This sequence belongs to the DsrF/TusC family. Heterohexamer, formed by a dimer of trimers. The hexameric TusBCD complex contains 2 copies each of TusB, TusC and TusD. The TusBCD complex interacts with TusE.

It localises to the cytoplasm. Functionally, part of a sulfur-relay system required for 2-thiolation of 5-methylaminomethyl-2-thiouridine (mnm(5)s(2)U) at tRNA wobble positions. The polypeptide is Protein TusC (Pectobacterium atrosepticum (strain SCRI 1043 / ATCC BAA-672) (Erwinia carotovora subsp. atroseptica)).